Here is an 819-residue protein sequence, read N- to C-terminus: Protein SCARECROW (819 aa).

4 disordered regions span residues 6 to 49 (LFNG…HSER), 65 to 136 (HNNN…INNN), 212 to 231 (SQNN…RNNT), and 393 to 420 (PLST…TTTT). Low complexity predominate over residues 15-33 (TTPDETNNNSTSNSSNIST). Residues 79 to 98 (RTNNTSSLNCSLPATTQKGV) show a composition bias toward polar residues. The segment covering 99–136 (TTTTTTTLASSGNNNNNNNNNNNYHYHNNNNNSIINNN) has biased composition (low complexity). Residues 418–448 (TTTSAELALARKKKEEIKEQKKKDEEGLHLL) adopt a coiled-coil conformation. A GRAS domain is found at 438–806 (KKKDEEGLHL…LCLLTASAWR (369 aa)). The tract at residues 445-507 (LHLLTLLLQC…RLVSSCLGIY (63 aa)) is leucine repeat I (LRI). A LxCxE motif motif is present at residues 452 to 456 (LQCAE). A VHIID region spans residues 526-591 (FQVFNGISPF…GGPPYVRLTG (66 aa)). The VHIID motif lies at 557–561 (VHIID). Positions 601–633 (ATGKRLSDFANKLGLPFEFFPVAEKVGNIDVEK) are leucine repeat II (LRII). The tract at residues 642–729 (VAVHWLQHSL…QQLLSREIRN (88 aa)) is PFYRE. The SAW stretch occupies residues 732 to 806 (AVGGPSRSGE…LCLLTASAWR (75 aa)).

Belongs to the GRAS family. As to expression, expressed in shoot apical meristem, leaf primordia, between the cortex and the differentiating vessels in lower shoots and in root endodermis.

It localises to the nucleus. Putative transcription factor involved in asymmetric cell division. The protein is Protein SCARECROW (SCR) of Pisum sativum (Garden pea).